A 393-amino-acid polypeptide reads, in one-letter code: tRNA(Met) cytidine acetate ligase (393 aa).

ATP-binding residues include glycine 81, asparagine 142, and arginine 167.

The protein belongs to the TmcAL family.

Its subcellular location is the cytoplasm. The catalysed reaction is cytidine(34) in elongator tRNA(Met) + acetate + ATP = N(4)-acetylcytidine(34) in elongator tRNA(Met) + AMP + diphosphate. In terms of biological role, catalyzes the formation of N(4)-acetylcytidine (ac(4)C) at the wobble position of elongator tRNA(Met), using acetate and ATP as substrates. First activates an acetate ion to form acetyladenylate (Ac-AMP) and then transfers the acetyl group to tRNA to form ac(4)C34. In Bacillus cereus (strain ZK / E33L), this protein is tRNA(Met) cytidine acetate ligase.